Here is a 26-residue protein sequence, read N- to C-terminus: Protein YsdD (26 aa).

The segment at 1-26 (MTIDKNWLNRSNKDPGRSLRFTHQPV) is disordered.

The chain is Protein YsdD from Escherichia coli (strain K12).